Here is a 123-residue protein sequence, read N- to C-terminus: Peptide methionine sulfoxide reductase MsrA (123 aa).

C8 is a catalytic residue.

The protein belongs to the MsrA Met sulfoxide reductase family.

It catalyses the reaction L-methionyl-[protein] + [thioredoxin]-disulfide + H2O = L-methionyl-(S)-S-oxide-[protein] + [thioredoxin]-dithiol. It carries out the reaction [thioredoxin]-disulfide + L-methionine + H2O = L-methionine (S)-S-oxide + [thioredoxin]-dithiol. Functionally, has an important function as a repair enzyme for proteins that have been inactivated by oxidation. Catalyzes the reversible oxidation-reduction of methionine sulfoxide in proteins to methionine. The protein is Peptide methionine sulfoxide reductase MsrA of Thermoactinomyces vulgaris.